We begin with the raw amino-acid sequence, 61 residues long: Large ribosomal subunit protein bL28 (61 aa).

A disordered region spans residues 1–26 (MAKDFVTGRKTTFGKKRSHALNQTNR).

This sequence belongs to the bacterial ribosomal protein bL28 family.

This chain is Large ribosomal subunit protein bL28, found in Ligilactobacillus salivarius (strain UCC118) (Lactobacillus salivarius).